The chain runs to 93 residues: UPF0147 protein MM_1385 (93 aa).

It belongs to the UPF0147 family.

The sequence is that of UPF0147 protein MM_1385 from Methanosarcina mazei (strain ATCC BAA-159 / DSM 3647 / Goe1 / Go1 / JCM 11833 / OCM 88) (Methanosarcina frisia).